Consider the following 377-residue polypeptide: 4-hydroxy-tetrahydrodipicolinate synthase 2, chloroplastic (377 aa).

The transit peptide at 1-51 (MMAAQPTANPGVRLGWKAPGALASPPRLALSRSAAAPLASHRVGRGKFSAA) directs the protein to the chloroplast. Position 120 (Thr120) interacts with pyruvate. Tyr206 functions as the Proton donor/acceptor in the catalytic mechanism. Lys234 functions as the Schiff-base intermediate with substrate in the catalytic mechanism. Ile273 is a pyruvate binding site.

It belongs to the DapA family. As to quaternary structure, tetramer of modified subunits derived from two genes in different combinations.

The protein resides in the plastid. The protein localises to the chloroplast. The catalysed reaction is L-aspartate 4-semialdehyde + pyruvate = (2S,4S)-4-hydroxy-2,3,4,5-tetrahydrodipicolinate + H2O + H(+). Its pathway is amino-acid biosynthesis; L-lysine biosynthesis via DAP pathway; (S)-tetrahydrodipicolinate from L-aspartate: step 3/4. Its activity is regulated as follows. Sensitive to lysine inhibition. This inhibition increase in an allosteric manner with increasing concentration of the inhibitor. Its function is as follows. Catalyzes the condensation of (S)-aspartate-beta-semialdehyde [(S)-ASA] and pyruvate to 4-hydroxy-tetrahydrodipicolinate (HTPA). The polypeptide is 4-hydroxy-tetrahydrodipicolinate synthase 2, chloroplastic (Triticum aestivum (Wheat)).